We begin with the raw amino-acid sequence, 241 residues long: Uridylate kinase (241 aa).

11–14 contributes to the ATP binding site; it reads KFSG. The tract at residues 19 to 24 is involved in allosteric activation by GTP; the sequence is GENGFG. Gly-53 contacts UMP. 2 residues coordinate ATP: Gly-54 and Arg-58. UMP contacts are provided by residues Asp-74 and 135 to 142; that span reads TGNPFFTT. ATP contacts are provided by Thr-162, Tyr-168, and Asp-171.

It belongs to the UMP kinase family. Homohexamer.

The protein localises to the cytoplasm. It carries out the reaction UMP + ATP = UDP + ADP. It participates in pyrimidine metabolism; CTP biosynthesis via de novo pathway; UDP from UMP (UMPK route): step 1/1. Allosterically activated by GTP. Inhibited by UTP. Functionally, catalyzes the reversible phosphorylation of UMP to UDP. In Wolinella succinogenes (strain ATCC 29543 / DSM 1740 / CCUG 13145 / JCM 31913 / LMG 7466 / NCTC 11488 / FDC 602W) (Vibrio succinogenes), this protein is Uridylate kinase.